A 742-amino-acid chain; its full sequence is Envelope glycoprotein H (742 aa).

An N-terminal signal peptide occupies residues 1–29; that stretch reads MRPGLPSYLIVLAVCLLSHLLSSRYGAEA. The Virion surface portion of the chain corresponds to 30-719; the sequence is ISEPLDKAFH…VVDATDSRLL (690 aa). N-linked (GlcNAc...) asparagine; by host glycans are attached at residues asparagine 55, asparagine 62, asparagine 67, and asparagine 192. An interaction with gL region spans residues 217–280; sequence YLIDELRYVK…QTEKHELLVL (64 aa). N-linked (GlcNAc...) asparagine; by host glycosylation is found at asparagine 641 and asparagine 700. The helical transmembrane segment at 720 to 740 threads the bilayer; sequence MMSVYALSAIIGIYLLYRMLK. Residues 741-742 lie on the Intravirion side of the membrane; the sequence is TC.

It belongs to the herpesviridae glycoprotein H family. Interacts with glycoprotein L (gL); this interaction is necessary for the correct processing and cell surface expression of gH. The heterodimer gH/gL seems to interact with gB trimers during fusion. Forms the envelope pentamer complex (PC) composed of gH, gL, UL128, UL130, and UL131A. The pentamer interacts with host NRP2. Forms the envelope trimer complex composed of gH, gL, and gO. The trimer interacts with host PDGFRA. The trimer also interacts with host EPHA2. In terms of processing, N-glycosylated, O-glycosylated, and sialylated.

It localises to the virion membrane. The protein resides in the host cell membrane. Its subcellular location is the host endosome membrane. Functionally, the heterodimer glycoprotein H-glycoprotein L is required for the fusion of viral and plasma membranes leading to virus entry into the host cell. Following initial binding to host receptor, membrane fusion is mediated by the fusion machinery composed of gB and the heterodimer gH/gL. May also be involved in the fusion between the virion envelope and the outer nuclear membrane during virion morphogenesis. In human cytomegalovirus, forms two distincts complexes to mediate viral entry, a trimer and a pentamer at the surface of the virion envelope. The gH-gL-gO trimer is required for infection in fibroblasts by interacting with host PDGFRA, and in glioblastoma cells by interacting with host EPHA2. The gH-gL-UL128-UL130-UL131A pentamer is essential for viral entry in epithelial, endothelial and myeloid cells via interaction with host NRP2. The protein is Envelope glycoprotein H of Human cytomegalovirus (strain Towne) (HHV-5).